The sequence spans 499 residues: Zinc finger protein PLAG1 (499 aa).

The disordered stretch occupies residues 1 to 33 (MATVIPGDLSEVRDTQKAPSGKRKRGESKPRKN). Residues 2–84 (ATVIPGDLSE…SKYKLQRHMA (83 aa)) form an interaction with KPNA2 region. The Nuclear localization signal motif lies at 22-25 (KRKR). 7 consecutive C2H2-type zinc fingers follow at residues 34–56 (FPCQLCDKAFNSVEKLKVHSFSH), 62–86 (YKCTHQDCTKAFVSKYKLQRHMATH), 92–114 (HKCNYCEKMFHRKDHLKNHLHTH), 121–143 (FKCEECGKSYNTKLGFKRHLALH), 150–172 (LTCKVCLQNFESTGVLLEHLKSH), 185–207 (HQCEHCERRFYTRKDVRRHMVVH), and 213–236 (FLCQYCAQRFGRKDHLTRHMKKSH). The tract at residues 41–242 (KAFNSVEKLK…KKSHNQELLK (202 aa)) is decreased nuclear import with localization in the nucleus but also in the cytoplasm. The segment at 243 to 383 (VKTEPVDFLD…SPASSSKLGL (141 aa)) is repression domain; contains 3 sumoylation motifs and massively decrease transcription activity. The tract at residues 243–499 (VKTEPVDFLD…TLPRFHQAFQ (257 aa)) is activates transcription; Inhibition of nuclear import due to lack of NLS and KPNA2 interaction. Residues lysine 244 and lysine 263 each participate in a glycyl lysine isopeptide (Lys-Gly) (interchain with G-Cter in SUMO) cross-link. Over residues 365-379 (GGAPSSSQDSPASSS) the composition is skewed to low complexity. Positions 365–400 (GGAPSSSQDSPASSSKLGLEPQSGSPDDGAGDLSLS) are disordered. The segment at 384-499 (EPQSGSPDDG…TLPRFHQAFQ (116 aa)) is massively activates transcription.

It belongs to the krueppel C2H2-type zinc-finger protein family. As to quaternary structure, interacts with KPNA2, which escorts protein to the nucleus via interaction with nuclear localization signal. Interacts with E3 SUMO-protein ligase PIAS1, PIAS2 and PIAS4. Post-translationally, sumoylated with SUMO1; which inhibits transcriptional activity, but does not affect nuclear localization. Blockers of sumoylation pathway such as SENP3 and inactive UBE2I increases transcriptional capacity. Sumoylation is increased in the presence of PIAS1. In terms of processing, acetylated by lysine acetyltransferase EP300; which activates transcriptional capacity. Lysine residues that are sumoylated also seem to be target for acetylation. Expressed in heart, spleen, lung, kidney, brain, testis and epididymis but not in salivary glands.

The protein localises to the nucleus. Its function is as follows. Transcription factor whose activation results in up-regulation of target genes, such as IGFII, leading to uncontrolled cell proliferation: when overexpressed in cultured cells, higher proliferation rate and transformation are observed. Other target genes such as CRLF1, CRABP2, CRIP2, PIGF are strongly induced in cells with PLAG1 induction. Proto-oncogene whose ectopic expression can trigger the development of pleomorphic adenomas of the salivary gland and lipoblastomas. Cooperates with CBFB-MYH11. The polypeptide is Zinc finger protein PLAG1 (Plag1) (Mus musculus (Mouse)).